Consider the following 430-residue polypeptide: Phosphomethylpyrimidine synthase (430 aa).

Substrate-binding positions include N67, M96, Y125, H161, S183–G185, D224–R227, and E263. Residue H267 coordinates Zn(2+). Y290 is a substrate binding site. Residue H331 coordinates Zn(2+). [4Fe-4S] cluster is bound by residues C406, C409, and C413.

The protein belongs to the ThiC family. As to quaternary structure, homodimer. [4Fe-4S] cluster serves as cofactor.

The catalysed reaction is 5-amino-1-(5-phospho-beta-D-ribosyl)imidazole + S-adenosyl-L-methionine = 4-amino-2-methyl-5-(phosphooxymethyl)pyrimidine + CO + 5'-deoxyadenosine + formate + L-methionine + 3 H(+). It participates in cofactor biosynthesis; thiamine diphosphate biosynthesis. Functionally, catalyzes the synthesis of the hydroxymethylpyrimidine phosphate (HMP-P) moiety of thiamine from aminoimidazole ribotide (AIR) in a radical S-adenosyl-L-methionine (SAM)-dependent reaction. The polypeptide is Phosphomethylpyrimidine synthase (Campylobacter jejuni subsp. jejuni serotype O:6 (strain 81116 / NCTC 11828)).